We begin with the raw amino-acid sequence, 160 residues long: MGVTKKPDLSDPILRAKLAKGMGHNYYGEPAWPNDLLYIFPVVILGTIACTVGLAVLEPSMIGEPANPFATPLEILPEWYFFPVFQILRTVPNKLLGVLLMAAVPAGLLTVPFLENVNKFQNPFRRPVATTVFLIGTVVALWLGIGAALPIDKSLTLGLF.

The next 3 membrane-spanning stretches (helical) occupy residues 36 to 56 (LLYI…GLAV), 95 to 115 (LLGV…PFLE), and 131 to 151 (TVFL…ALPI).

It belongs to the cytochrome b family. PetD subfamily. The 4 large subunits of the cytochrome b6-f complex are cytochrome b6, subunit IV (17 kDa polypeptide, petD), cytochrome f and the Rieske protein, while the 4 small subunits are petG, petL, petM and petN. The complex functions as a dimer.

The protein resides in the plastid. Its subcellular location is the chloroplast thylakoid membrane. Its function is as follows. Component of the cytochrome b6-f complex, which mediates electron transfer between photosystem II (PSII) and photosystem I (PSI), cyclic electron flow around PSI, and state transitions. This Marchantia polymorpha (Common liverwort) protein is Cytochrome b6-f complex subunit 4.